Reading from the N-terminus, the 98-residue chain is NADH-ubiquinone oxidoreductase chain 4L (98 aa).

The next 3 helical transmembrane spans lie at 1 to 21 (MSLT…GLLM), 29 to 49 (SLLC…MTIL), and 61 to 81 (IILL…LVMV).

The protein belongs to the complex I subunit 4L family. In terms of assembly, core subunit of respiratory chain NADH dehydrogenase (Complex I) which is composed of 45 different subunits.

It is found in the mitochondrion inner membrane. It carries out the reaction a ubiquinone + NADH + 5 H(+)(in) = a ubiquinol + NAD(+) + 4 H(+)(out). Functionally, core subunit of the mitochondrial membrane respiratory chain NADH dehydrogenase (Complex I) which catalyzes electron transfer from NADH through the respiratory chain, using ubiquinone as an electron acceptor. Part of the enzyme membrane arm which is embedded in the lipid bilayer and involved in proton translocation. In Chiroderma trinitatum (Little big-eyed bat), this protein is NADH-ubiquinone oxidoreductase chain 4L (MT-ND4L).